The chain runs to 311 residues: NAD kinase (311 aa).

The active-site Proton acceptor is the aspartate 89. NAD(+) is bound by residues 89 to 90 (DG), arginine 94, 163 to 164 (NE), aspartate 193, and 204 to 209 (TAYAFS).

Belongs to the NAD kinase family. The cofactor is a divalent metal cation.

It is found in the cytoplasm. It catalyses the reaction NAD(+) + ATP = ADP + NADP(+) + H(+). Involved in the regulation of the intracellular balance of NAD and NADP, and is a key enzyme in the biosynthesis of NADP. Catalyzes specifically the phosphorylation on 2'-hydroxyl of the adenosine moiety of NAD to yield NADP. This chain is NAD kinase, found in Mycobacterium leprae (strain Br4923).